The sequence spans 493 residues: 3-octaprenyl-4-hydroxybenzoate carboxy-lyase (493 aa).

Residue Asn-172 participates in Mn(2+) binding. Prenylated FMN is bound by residues 175–177 (IYR), 189–191 (RWL), and 194–195 (RG). Glu-238 contacts Mn(2+). The active-site Proton donor is Asp-287.

It belongs to the UbiD family. In terms of assembly, homohexamer. It depends on prenylated FMN as a cofactor. Mn(2+) is required as a cofactor.

The protein localises to the cell membrane. The catalysed reaction is a 4-hydroxy-3-(all-trans-polyprenyl)benzoate + H(+) = a 2-(all-trans-polyprenyl)phenol + CO2. It participates in cofactor biosynthesis; ubiquinone biosynthesis. Its function is as follows. Catalyzes the decarboxylation of 3-octaprenyl-4-hydroxy benzoate to 2-octaprenylphenol, an intermediate step in ubiquinone biosynthesis. The protein is 3-octaprenyl-4-hydroxybenzoate carboxy-lyase of Shewanella denitrificans (strain OS217 / ATCC BAA-1090 / DSM 15013).